The following is a 531-amino-acid chain: Chaperonin GroEL 2 (531 aa).

ATP is bound by residues 30–33 (TLGP), 87–91 (DGTTT), Gly414, and Asp494.

Belongs to the chaperonin (HSP60) family. Forms a cylinder of 14 subunits composed of two heptameric rings stacked back-to-back. Interacts with the co-chaperonin GroES.

Its subcellular location is the cytoplasm. The enzyme catalyses ATP + H2O + a folded polypeptide = ADP + phosphate + an unfolded polypeptide.. Functionally, together with its co-chaperonin GroES, plays an essential role in assisting protein folding. The GroEL-GroES system forms a nano-cage that allows encapsulation of the non-native substrate proteins and provides a physical environment optimized to promote and accelerate protein folding. The polypeptide is Chaperonin GroEL 2 (Cutibacterium acnes (strain DSM 16379 / KPA171202) (Propionibacterium acnes)).